Reading from the N-terminus, the 97-residue chain is Protein CYSTEINE-RICH TRANSMEMBRANE MODULE 7 (97 aa).

The disordered stretch occupies residues 1–27; sequence MASYHVSHDSYQSPGPSPLYQPIIEAP. Over residues 15-27 the composition is skewed to pro residues; it reads GPSPLYQPIIEAP. Residues 68-88 traverse the membrane as a helical segment; sequence YVGCFPFLRSCLTTLCCCWFV.

It belongs to the CYSTM1 family. As to quaternary structure, homodimer and heterodimers. Interacts with CYSTM3, CYSTM4, CYSTM5, CYSTM6, CYSTM10, WIH1/CYSTM13 and CYSTM11. Binds weakly to CYSTM1, CYSTM2 and CYSTM12. As to expression, mostly expressed in siliques and, to a lower extent, in stems, roots, leaves and flowers.

Its subcellular location is the cell membrane. Its function is as follows. Involved in resistance to abiotic stress. This Arabidopsis thaliana (Mouse-ear cress) protein is Protein CYSTEINE-RICH TRANSMEMBRANE MODULE 7.